The following is a 506-amino-acid chain: Dipeptide and tripeptide permease A (506 aa).

Over 1–36 (MSTANNNSEHPESVSLNAFKQPKAFYLIFSIELWER) the chain is Cytoplasmic. A helical transmembrane segment spans residues 37–57 (FGYYGLQGIMAVYLVKMLGLS). Residues 58 to 61 (EADS) lie on the Periplasmic side of the membrane. Residues 62-82 (ITLFSSFSALVYGFVAIGGWL) form a helical membrane-spanning segment. The Cytoplasmic portion of the chain corresponds to 83–91 (GDKVLGSKR). Helical transmembrane passes span 92–112 (VIVL…YSGH) and 113–133 (EIFW…LFKA). Topologically, residues 134-155 (NPSSLLSTCYEKDDPRLDGAFT) are cytoplasmic. The chain crosses the membrane as a helical span at residues 156-176 (MYYMSVNIGSFLSMLATPWLA). Residues 177–180 (AKYG) lie on the Periplasmic side of the membrane. Residues 181-201 (WSVAFSLSVVGMLITLVNFMV) traverse the membrane as a helical segment. Topologically, residues 202 to 222 (CHKWVKQHGSKPDFKPLQVKK) are cytoplasmic. The helical transmembrane segment at 223–243 (LLMVLVGVVALVALSSWLLHN) threads the bilayer. Residues 244–248 (QIIAR) lie on the Periplasmic side of the membrane. A helical transmembrane segment spans residues 249-269 (WALAIVSIGIVIVFAKETFAL). The Cytoplasmic segment spans residues 270 to 276 (HGAARRK). A helical membrane pass occupies residues 277–297 (MIVAFLLMLEAVVFFVLYSQM). Residues 298-322 (PTSLNFFAIHNVEHNILGLAFEPEQ) lie on the Periplasmic side of the membrane. A helical membrane pass occupies residues 323–343 (YQALNPFWIMLASPILAALYN). Residues 344–354 (KMGDRLPMPHK) lie on the Cytoplasmic side of the membrane. Residues 355 to 375 (FAFGMILCSGAFLVLPWGASF) form a helical membrane-spanning segment. Topologically, residues 376–385 (ANEQGIVSVN) are periplasmic. A helical membrane pass occupies residues 386 to 406 (WLILSYALQSIGELMISGLGL). At 407–416 (AMVAQLVPQR) the chain is on the cytoplasmic side. Residues 417-437 (LMGFIMGSWFLTTAAAALIAG) traverse the membrane as a helical segment. Topologically, residues 438–461 (KVAGLTAVPGDVNDAHASLAIYSH) are periplasmic. Residues 462–482 (VFMQIGIATAVIAILMMLTAP) form a helical membrane-spanning segment. At 483 to 506 (KLHRMTLDTAEDTEKKAQAAAITN) the chain is on the cytoplasmic side.

The protein belongs to the major facilitator superfamily. Proton-dependent oligopeptide transporter (POT/PTR) (TC 2.A.17) family. DtpA subfamily.

The protein localises to the cell inner membrane. In terms of biological role, proton-dependent permease that transports di- and tripeptides. This chain is Dipeptide and tripeptide permease A, found in Serratia proteamaculans (strain 568).